Consider the following 824-residue polypeptide: MLQICIRRVTVKNDNAVEHNNQDCFLSRTSSRDESHALHKVRESVCGMVILPDKAHSSIRYQDHQLYFCSASCESKFKAHPDHYFTEDASEHHHHHDHHEVSPDKIKQSHRQAEKEISEGVWTCPMHPEIRRSGPGSCPVCGMALEPLVATASTGTSDELRDMTRRFWLGLLLAFPVLILEMGSHLFPALRNTVPPQYNTWLQLLLASPVVLWCGWPFFARAGMSLRNRSLNMFTLVAMGTGVAWVYSVIATVFPSWFPASFRNMDGLVAIYFEAAAVITVLVLLGQVLELRAREQTSGAITALLNLAPKTARRLDQDGHETDINAEDVLPGDKLRIRPGESIPVDGIVVEGKTTVDESMVTGESMPVTKTEGEPVIGGTINQTGSLIIRAEKVGDETMLSRIVQMVADAQRSRAPIQRMADSVSGWFVPLVILIAVVAFMIWSVWGPEPRMAHGLIAAVSVLIIACPCALGLATPMSIMVGVGKGAQAGVLIKNAEALERLEKVDTLVVDKTGTLTEGSPTVTGIISLNPGGETSLLRVTAAVDKGSQHPLGMAVVKAAQEKGIAIPAVTHFNAPSGKGVSGDVEGQRVVIGNELAMQENSIVIDNQKAVADTLRMEGTTVIYVATDGHLAGLIAISDPVKATTPDALKALRQAGIRIVMLTGDNQLTAEAVARKLGIDEVEAGILPDGKKAVITRLKASGHVVAMAGDGVNDAPALAAADVGIAMGTGTDVAIESAGVTLLKGDLMILNRARHLSEITMKNIRQNLFFAFIYNALGVPVAAGLLYPVYGILLSPVIAAAAMALSSVSVIVNALRLKSVRLGK.

The interval 89–112 is disordered; the sequence is ASEHHHHHDHHEVSPDKIKQSHRQ. The span at 98–112 shows a compositional bias: basic and acidic residues; sequence HHEVSPDKIKQSHRQ. A run of 6 helical transmembrane segments spans residues 167–187, 200–220, 234–254, 268–288, 427–447, and 455–475; these read FWLG…SHLF, TWLQ…PFFA, FTLV…ATVF, LVAI…LGQV, WFVP…SVWG, and GLIA…GLAT. Catalysis depends on Asp-511, which acts as the 4-aspartylphosphate intermediate. A run of 2 helical transmembrane segments spans residues 764–784 and 785–805; these read IRQN…VAAG and LLYP…AMAL.

It belongs to the cation transport ATPase (P-type) (TC 3.A.3) family. Type IB subfamily.

It localises to the cell membrane. It catalyses the reaction Ag(+)(in) + ATP + H2O = Ag(+)(out) + ADP + phosphate + H(+). In terms of biological role, component of the sil cation-efflux system that confers resistance to silver. In Salmonella typhimurium, this protein is Silver exporting P-type ATPase (silP).